A 455-amino-acid polypeptide reads, in one-letter code: Serine--tRNA ligase (455 aa).

An L-serine-binding site is contributed by 252 to 254 (TAE). ATP-binding positions include 283–285 (RKE) and valine 299. Glutamate 306 contributes to the L-serine binding site. Residue 370-373 (EVVS) participates in ATP binding. Threonine 406 provides a ligand contact to L-serine.

The protein belongs to the class-II aminoacyl-tRNA synthetase family. Type-1 seryl-tRNA synthetase subfamily. As to quaternary structure, homodimer. The tRNA molecule binds across the dimer.

It is found in the cytoplasm. The catalysed reaction is tRNA(Ser) + L-serine + ATP = L-seryl-tRNA(Ser) + AMP + diphosphate + H(+). It catalyses the reaction tRNA(Sec) + L-serine + ATP = L-seryl-tRNA(Sec) + AMP + diphosphate + H(+). It functions in the pathway aminoacyl-tRNA biosynthesis; selenocysteinyl-tRNA(Sec) biosynthesis; L-seryl-tRNA(Sec) from L-serine and tRNA(Sec): step 1/1. Its function is as follows. Catalyzes the attachment of serine to tRNA(Ser). Is also able to aminoacylate tRNA(Sec) with serine, to form the misacylated tRNA L-seryl-tRNA(Sec), which will be further converted into selenocysteinyl-tRNA(Sec). This chain is Serine--tRNA ligase, found in Thermococcus kodakarensis (strain ATCC BAA-918 / JCM 12380 / KOD1) (Pyrococcus kodakaraensis (strain KOD1)).